Consider the following 306-residue polypeptide: Anamorsin (306 aa).

The interval 6–172 (IAPGQRVAVI…KPNFEVGSSS (167 aa)) is N-terminal SAM-like domain. The interval 173 to 224 (QLKLSFAKKTSPSGKPSVDPATAKLWTLSASDMNDEEMDLLDSDELLDSEDL) is linker. [2Fe-2S] cluster-binding residues include Cys-237, Cys-246, Cys-249, and Cys-251. A fe-S binding site A region spans residues 237–251 (CKEKGKKKACKNCTC). Residues Cys-270, Cys-273, Cys-281, and Cys-284 each coordinate [4Fe-4S] cluster. 2 short sequence motifs (cx2C motif) span residues 270-273 (CGNC) and 281-284 (CASC). Residues 270–284 (CGNCYLGDAFRCASC) form a fe-S binding site B region.

The protein belongs to the anamorsin family. In terms of assembly, monomer. Interacts with NDOR1. Interacts with CHCHD4. The cofactor is [2Fe-2S] cluster. Requires [4Fe-4S] cluster as cofactor.

It is found in the cytoplasm. The protein resides in the nucleus. Its subcellular location is the mitochondrion intermembrane space. Its function is as follows. Component of the cytosolic iron-sulfur (Fe-S) protein assembly (CIA) machinery required for the maturation of extramitochondrial Fe-S proteins. Part of an electron transfer chain functioning in an early step of cytosolic Fe-S biogenesis, facilitating the de novo assembly of a [4Fe-4S] cluster on the scaffold complex NUBP1-NUBP2. Electrons are transferred to CIAPIN1 from NADPH via the FAD- and FMN-containing protein NDOR1. NDOR1-CIAPIN1 are also required for the assembly of the diferric tyrosyl radical cofactor of ribonucleotide reductase (RNR), probably by providing electrons for reduction during radical cofactor maturation in the catalytic small subunit. Has anti-apoptotic effects in the cell. Involved in negative control of cell death upon cytokine withdrawal. Promotes development of hematopoietic cells. This is Anamorsin from Gallus gallus (Chicken).